The sequence spans 1035 residues: Cell-division control histidine kinase PdhS (1035 aa).

Positions 1–613 (MSGSYPFIDI…HADGSEEPVD (613 aa)) are important for polar localization. The tract at residues 500–533 (QGLANTRAESETPVSETSSIEPVEPTPPVKTRSE) is disordered. An interaction with DivK region spans residues 614-1035 (THLNAIAWRG…VFPPTRVLAD (422 aa)). In terms of domain architecture, PAS spans 659–730 (HVEELKTILD…YLHGLSGNGV (72 aa)). A Histidine kinase domain is found at 802–1031 (RISHEIRTPL…VVEIVFPPTR (230 aa)). Position 805 is a phosphohistidine; by autocatalysis (histidine 805).

Interacts with DivK.

It localises to the cytoplasm. It carries out the reaction ATP + protein L-histidine = ADP + protein N-phospho-L-histidine.. In terms of biological role, functions as a polar differentiation marker. Essential protein that, by localizing in the old pole of dividing cells, controls cell division and maturation, probably through control of DivK phosphorylation status and cellular distribution, which in turn regulates CtrA, a transcriptional regulator of the minB operon. The asymmetrical localization of this protein is probably required for cells to enter a new division cycle. The polypeptide is Cell-division control histidine kinase PdhS (pdhS) (Brucella suis (strain ATCC 23445 / NCTC 10510)).